Here is a 192-residue protein sequence, read N- to C-terminus: Protein FAM169BP (192 aa).

Residues 121 to 192 (YQAHPGNSED…PPGKLTRSSP (72 aa)) form a disordered region. The span at 159–177 (EELEDTKDDPECGVEEEDA) shows a compositional bias: acidic residues.

This sequence belongs to the FAM169 family.

This Homo sapiens (Human) protein is Protein FAM169BP.